The primary structure comprises 331 residues: Betaine-homocysteine S-methyltransferase (331 aa).

The 322-residue stretch at Val3–Val324 folds into the Hcy-binding domain. Residues Cys243, Cys309, and Cys310 each contribute to the Zn(2+) site.

Belongs to the Betaine-homocysteine S-methyltransferase, BHMT family. Requires Zn(2+) as cofactor.

The catalysed reaction is L-homocysteine + glycine betaine = N,N-dimethylglycine + L-methionine. The protein operates within amino-acid biosynthesis; L-methionine biosynthesis via de novo pathway. Functionally, involved in the regulation of homocysteine metabolism. Converts betaine and homocysteine to dimethylglycine and methionine, respectively. The polypeptide is Betaine-homocysteine S-methyltransferase (Drosophila melanogaster (Fruit fly)).